Here is a 466-residue protein sequence, read N- to C-terminus: MIPVTSFSGKTVAVFGLGGSGLASCHALKAGGAEVIAGDDNADNLAKAAQAGFITADLRTVVWANLAALVLAPGVPLTHPSPHWSVLAARQAGVEVIGDVELFCRERARHAPDAPFIAITGTNGKSTTTALVAHLMREAGYDVQMGGNIGTAILSLEPPRRGRVHVIEMSSYQIDLAPSLDPTVGILLNLSPDHLDRHGTIEHYAQVKERLIAGVQPQGTAVVGVDDHWCAAIADRQEQAGRSVVRVSVKRPLAHGVSVEQDRIVLVSGGARSEIADIGGIGSLRGRHNAQNAACASAGALALGVSRDILQQDLRSFPGLAHRMEQVGRKAHVLFVNDSKGTNADATEKALSSFDEIFWIAGGKPKSGGIASLDAFFPRIRKAYLIGEAAQEFAATLEGKVAYEISGTLEAAVPAAARDAEGAGRAGAVVLLSPACASFDQFRNFEVRGDRFRELVQALPGVTPVV.

ATP is bound at residue 121 to 127; it reads GTNGKST.

The protein belongs to the MurCDEF family.

It localises to the cytoplasm. It carries out the reaction UDP-N-acetyl-alpha-D-muramoyl-L-alanine + D-glutamate + ATP = UDP-N-acetyl-alpha-D-muramoyl-L-alanyl-D-glutamate + ADP + phosphate + H(+). Its pathway is cell wall biogenesis; peptidoglycan biosynthesis. Functionally, cell wall formation. Catalyzes the addition of glutamate to the nucleotide precursor UDP-N-acetylmuramoyl-L-alanine (UMA). In Nitrobacter winogradskyi (strain ATCC 25391 / DSM 10237 / CIP 104748 / NCIMB 11846 / Nb-255), this protein is UDP-N-acetylmuramoylalanine--D-glutamate ligase.